Here is a 371-residue protein sequence, read N- to C-terminus: Ribosomal RNA small subunit methyltransferase H (371 aa).

Residues 92 to 94 (GGH), aspartate 111, tyrosine 138, aspartate 159, and glutamine 166 contribute to the S-adenosyl-L-methionine site.

Belongs to the methyltransferase superfamily. RsmH family.

It localises to the cytoplasm. The catalysed reaction is cytidine(1402) in 16S rRNA + S-adenosyl-L-methionine = N(4)-methylcytidine(1402) in 16S rRNA + S-adenosyl-L-homocysteine + H(+). Its function is as follows. Specifically methylates the N4 position of cytidine in position 1402 (C1402) of 16S rRNA. In Mycolicibacterium gilvum (strain PYR-GCK) (Mycobacterium gilvum (strain PYR-GCK)), this protein is Ribosomal RNA small subunit methyltransferase H.